The following is a 376-amino-acid chain: Chaperone protein DnaJ (376 aa).

A J domain is found at 4–70 (DYYQILGVSK…QKRAAYDRFG (67 aa)). Residues 139–217 (GVEKNISFSS…CHGLGRYHKQ (79 aa)) form a CR-type zinc finger. The Zn(2+) site is built by cysteine 152, cysteine 155, cysteine 169, cysteine 172, cysteine 191, cysteine 194, cysteine 205, and cysteine 208. 4 CXXCXGXG motif repeats span residues 152–159 (CDTCHGSG), 169–176 (CDACGGVG), 191–198 (CHKCQGNG), and 205–212 (CKKCHGLG).

The protein belongs to the DnaJ family. As to quaternary structure, homodimer. Zn(2+) is required as a cofactor.

It localises to the cytoplasm. In terms of biological role, participates actively in the response to hyperosmotic and heat shock by preventing the aggregation of stress-denatured proteins and by disaggregating proteins, also in an autonomous, DnaK-independent fashion. Unfolded proteins bind initially to DnaJ; upon interaction with the DnaJ-bound protein, DnaK hydrolyzes its bound ATP, resulting in the formation of a stable complex. GrpE releases ADP from DnaK; ATP binding to DnaK triggers the release of the substrate protein, thus completing the reaction cycle. Several rounds of ATP-dependent interactions between DnaJ, DnaK and GrpE are required for fully efficient folding. Also involved, together with DnaK and GrpE, in the DNA replication of plasmids through activation of initiation proteins. This Rickettsia bellii (strain RML369-C) protein is Chaperone protein DnaJ.